The primary structure comprises 540 residues: Light-independent protochlorophyllide reductase subunit B (540 aa).

Residue Asp36 coordinates [4Fe-4S] cluster. Asp292 functions as the Proton donor in the catalytic mechanism. Residue 428-429 (GL) participates in substrate binding. A disordered region spans residues 451–490 (SNVASGVEPSTPSVSSEVSASSSASPEASAPTPSPDGDMV). Residues 457–481 (VEPSTPSVSSEVSASSSASPEASAP) show a composition bias toward low complexity.

This sequence belongs to the ChlB/BchB/BchZ family. As to quaternary structure, protochlorophyllide reductase is composed of three subunits; BchL, BchN and BchB. Forms a heterotetramer of two BchB and two BchN subunits. Requires [4Fe-4S] cluster as cofactor.

It carries out the reaction chlorophyllide a + oxidized 2[4Fe-4S]-[ferredoxin] + 2 ADP + 2 phosphate = protochlorophyllide a + reduced 2[4Fe-4S]-[ferredoxin] + 2 ATP + 2 H2O. The protein operates within porphyrin-containing compound metabolism; bacteriochlorophyll biosynthesis (light-independent). Its function is as follows. Component of the dark-operative protochlorophyllide reductase (DPOR) that uses Mg-ATP and reduced ferredoxin to reduce ring D of protochlorophyllide (Pchlide) to form chlorophyllide a (Chlide). This reaction is light-independent. The NB-protein (BchN-BchB) is the catalytic component of the complex. The polypeptide is Light-independent protochlorophyllide reductase subunit B (Chlorobium chlorochromatii (strain CaD3)).